Reading from the N-terminus, the 1173-residue chain is Pyruvate-flavodoxin oxidoreductase (1173 aa).

2 4Fe-4S ferredoxin-type domains span residues 681–710 (NVPV…PVLI) and 735–766 (YRLA…MQPL). [4Fe-4S] cluster is bound by residues C690, C693, C696, C700, C744, C747, C750, C754, C810, C813, and C838. Positions 922 to 933 (GEGTRERAEKVG) are enriched in basic and acidic residues. Positions 922-946 (GEGTRERAEKVGDTSGFANAREKSR) are disordered. C1075 contributes to the [4Fe-4S] cluster binding site.

This sequence belongs to the pyruvate:ferredoxin/flavodoxin oxidoreductase family. Requires [4Fe-4S] cluster as cofactor.

The catalysed reaction is oxidized [flavodoxin] + pyruvate + CoA + 2 H(+) = reduced [flavodoxin] + acetyl-CoA + CO2. Oxidoreductase required for the transfer of electrons from pyruvate to flavodoxin, which reduces nitrogenase. The sequence is that of Pyruvate-flavodoxin oxidoreductase (nifJ) from Enterobacter agglomerans (Erwinia herbicola).